Consider the following 809-residue polypeptide: TLR4 interactor with leucine rich repeats (809 aa).

The N-terminal stretch at 1-25 is a signal peptide; that stretch reads MEGVGAVRFWLVVCGCLAFPPRAES. In terms of domain architecture, LRRNT spans 26 to 57; that stretch reads VCPERCDCQHPQHLLCTNRGLRAVPKTSSLPS. Over 26 to 694 the chain is Extracellular; sequence VCPERCDCQH…AGGRGGVDYQ (669 aa). LRR repeat units lie at residues 61-81, 84-105, 108-129, 132-153, 156-177, 180-201, 204-223, 230-251, 254-275, 278-298, 302-323, and 326-347; these read VLTYSLGGNFITNITAFDFHR, QLRRLDLQYNQIRSLHPKTFEK, RLEELYLGNNLLQALVPGTLAP, KLRILYANGNEIGRLSRGSFEG, SLVKLRLDGNVLGALPDAVFAP, NLLYLHLESNRIRFLGKNAFSQ, KLRFLNLSANELQPSLRHAA, SLSTLILSANSLQHLGPRVFQH, RLGLLSLSGNQLTHLAPEAFWG, ALRELRLEGNRLNQLPLTLLE, SLEALDLSGNELSALHPATFGH, and RLRELSLRDNALSALSGDIFAA. Asn-73 carries an N-linked (GlcNAc...) asparagine glycan. One can recognise an LRRCT domain in the interval 359–416; that stretch reads NGWTCDCRLRGLKRWMGNWHSQGRLLTVFVQCRHPPALRGKYLDYLDDQLLQNGSCVD. N-linked (GlcNAc...) asparagine glycosylation is present at Asn-411. Disordered regions lie at residues 412–462 and 483–563; these read GSCV…RGRL and RLSR…SAVQ. Positions 421-436 are enriched in polar residues; it reads PTAGSRQWPLPTSSEE. Residues 488-506 show a composition bias toward low complexity; it reads GPGPHQGPSAAAPGSAPQS. The segment covering 521 to 543 has biased composition (polar residues); sequence ANLSQTEPTPTSEPASGTPSARD. The span at 554 to 563 shows a compositional bias: low complexity; sequence ASEQQESAVQ. N-linked (GlcNAc...) asparagine glycosylation is present at Asn-587. The helical transmembrane segment at 695–715 threads the bilayer; that stretch reads LLTLVLLAVNALLVLLALAAW. At 716-809 the chain is on the cytoplasmic side; it reads GSRWLRRKLR…EDHLLQRFAD (94 aa). The residue at position 796 (Ser-796) is a Phosphoserine.

Belongs to the lipopolysaccharide (LPS) receptor, a multi-protein complex containing at least CD14, MD-2 and TLR4. Interacts with TLR4; this interaction is greatly enhanced by LPS stimulation. Interacts with LPS. N-glycolysaled. Highly expressed in brain, spinal cord and lung.

The protein resides in the membrane. Functionally, component of the TLR4 signaling complex. Mediates the innate immune response to bacterial lipopolysaccharide (LPS) leading to cytokine secretion. This is TLR4 interactor with leucine rich repeats (Tril) from Mus musculus (Mouse).